The primary structure comprises 126 residues: Nucleoside diphosphate kinase B (126 aa).

5 residues coordinate ATP: K6, F37, T68, R79, and N89. H92 acts as the Pros-phosphohistidine intermediate in catalysis.

It belongs to the NDK family. Mg(2+) is required as a cofactor.

It is found in the cytoplasm. It localises to the nucleus. The protein localises to the cell projection. The protein resides in the lamellipodium. Its subcellular location is the ruffle. It carries out the reaction a 2'-deoxyribonucleoside 5'-diphosphate + ATP = a 2'-deoxyribonucleoside 5'-triphosphate + ADP. The catalysed reaction is a ribonucleoside 5'-diphosphate + ATP = a ribonucleoside 5'-triphosphate + ADP. Functionally, major role in the synthesis of nucleoside triphosphates other than ATP. This chain is Nucleoside diphosphate kinase B (nme2), found in Macruronus magellanicus (Patagonian grenadier).